Here is a 336-residue protein sequence, read N- to C-terminus: Vomeronasal type-1 receptor 102 (336 aa).

At 1–42 (MVGVQICQGMTSEILFFSLQPQFSNMMNKNSRLHIDSNIRNT) the chain is on the extracellular side. The chain crosses the membrane as a helical span at residues 43–63 (FFTEIGIGVSANSLLLLFNIF). The Cytoplasmic portion of the chain corresponds to 64–75 (KFIHGQRSRLTD). The chain crosses the membrane as a helical span at residues 76 to 96 (LPIGLLSLINLLMLLIMACIA). Topologically, residues 97 to 120 (TDIFISCRRWDDIICKSLLYLYRT) are extracellular. A disulfide bridge connects residues Cys111 and Cys198. A helical membrane pass occupies residues 121-140 (FRGLSLSTTCLLSVLQAIIL). The Cytoplasmic segment spans residues 141 to 157 (SPRSSCLAKYKHKPPHH). Residues 158 to 178 (IFCAMLFLSVLYMFISSHLLL) traverse the membrane as a helical segment. At 179–213 (SIIATPNLTTNDFIHVSQSCSILPMSYLMQSMFST) the chain is on the extracellular side. N-linked (GlcNAc...) asparagine glycosylation is present at Asn185. A helical transmembrane segment spans residues 214-234 (LLAIRNVFLISLIVLSTWYMV). The Cytoplasmic segment spans residues 235–264 (ALLCRHRKQTRHLQDTSLSRKASPEQRATR). The chain crosses the membrane as a helical span at residues 265–285 (SILMLRSLFVLMSIFDSIVSC). Residues 286–296 (SRTMYLNDPTS) lie on the Extracellular side of the membrane. Residues 297–317 (YSIQLLVVHIYATVSPFVFMI) form a helical membrane-spanning segment. Residues 318 to 336 (TEKHIVNYLKSMYVRVLNV) are Cytoplasmic-facing.

This sequence belongs to the G-protein coupled receptor 1 family. Expressed in 1-4% of neurons of the vomeronasal organ. Only one pheromone receptor gene may be expressed in a particular neuron. Not expressed in the main olfactory epithelium.

Its subcellular location is the cell membrane. In terms of biological role, putative pheromone receptor implicated in the regulation of social as well as reproductive behavior. This chain is Vomeronasal type-1 receptor 102 (Vom1r102), found in Rattus norvegicus (Rat).